The chain runs to 239 residues: Lipid transferase CIDEC (239 aa).

The interval 1–35 is required for liquid-liquid phase separation (LLPS); that stretch reads MDYAMKSLSLLYPRSLSRHVAVSTAVVTQQLVSKP. One can recognise a CIDE-N domain in the interval 41 to 118; it reads RARPCRVSTA…VLLKGQKWKP (78 aa). The RKKR polybasic motif signature appears at 123-126; sequence RKKR.

This sequence belongs to the CIDE family. Homodimer. Homooligomer; undergoes liquid-liquid phase separation (LLPS) via its N-terminus, facilitating lipid droplet fusion, occurs at the lipid droplet contact sites. Interacts with CIDEA. Interacts with PLIN1. Interacts with NFAT5; this interaction is direct and retains NFAT5 in the cytoplasm. Interacts with CEBPB. Interacts with isoform CLSTN3beta of CLSTN3; inhibiting the lipid transferase activity of CIDEC. Post-translationally, ubiquitinated and targeted to proteasomal degradation, resulting in a short half-life (about 15 minutes in 3T3-L1 cells). Protein stability depends on triaclyglycerol synthesis, fatty acid availability and lipid droplet formation. As to expression, expressed almost exclusively in adipose tissue, including subcutaneous and epididymal white adipose tissue (at protein level). Although abundantly present in brown adipose tissue at the mRNA level, the protein is almost undetectable in this tissue, or at moderate levels. Expressed in the mammary gland, in stromal adipose tissue, but becomes undetectable at the end of pregnancy and during lactation (at protein level). Expressed at low levels in skeletal muscle and heart.

It localises to the lipid droplet. The protein localises to the endoplasmic reticulum. Its subcellular location is the nucleus. The catalysed reaction is a triacyl-sn-glycerol(in) = a triacyl-sn-glycerol(out). In terms of biological role, lipid transferase specifically expressed in white adipose tissue, which promotes unilocular lipid droplet formation by mediating lipid droplet fusion. Lipid droplet fusion promotes their enlargement, restricting lipolysis and favoring lipid storage. Localizes on the lipid droplet surface, at focal contact sites between lipid droplets, and mediates atypical lipid droplet fusion by undergoing liquid-liquid phase separation (LLPS) and promoting directional net neutral lipid transfer from the smaller to larger lipid droplets. The transfer direction may be driven by the internal pressure difference between the contacting lipid droplet pair. Its role in neutral lipid transfer and lipid droplet enlargement is activated by the interaction with PLIN1. May also act as a CEBPB coactivator in the white adipose tissue to control the expression of a subset of CEBPB downstream target genes, including SOCS1, SOCS3, TGFB1, TGFBR1, ID2 and XDH. When overexpressed in preadipocytes, induces apoptosis or increases cell susceptibility to apoptosis induced by serum deprivation or TGFB treatment. This Mus musculus (Mouse) protein is Lipid transferase CIDEC.